The primary structure comprises 353 residues: Uroporphyrinogen decarboxylase (353 aa).

Residues 35–39 (RQAGR), Phe-54, Asp-84, Tyr-160, Ser-215, and His-329 contribute to the substrate site.

The protein belongs to the uroporphyrinogen decarboxylase family. In terms of assembly, homodimer.

The protein resides in the cytoplasm. The enzyme catalyses uroporphyrinogen III + 4 H(+) = coproporphyrinogen III + 4 CO2. The protein operates within porphyrin-containing compound metabolism; protoporphyrin-IX biosynthesis; coproporphyrinogen-III from 5-aminolevulinate: step 4/4. Its function is as follows. Catalyzes the decarboxylation of four acetate groups of uroporphyrinogen-III to yield coproporphyrinogen-III. This Staphylococcus epidermidis (strain ATCC 12228 / FDA PCI 1200) protein is Uroporphyrinogen decarboxylase.